Consider the following 134-residue polypeptide: Large ribosomal subunit protein eL32 (134 aa).

The protein belongs to the eukaryotic ribosomal protein eL32 family.

This Spodoptera frugiperda (Fall armyworm) protein is Large ribosomal subunit protein eL32 (RpL32).